A 63-amino-acid chain; its full sequence is Small integral membrane protein 43 (63 aa).

Important for interaction with SLC2A1 and SLC2A3 regions lie at residues 7-29 (LLLYLALFFFLLFLLFLLLFVVI) and 51-57 (HREPWGF). A helical transmembrane segment spans residues 9-29 (LYLALFFFLLFLLFLLLFVVI).

Interacts with glucose transporters SLC2A1/GLUT1 and SLC2A3/GLUT3; the interactions may promote SLC2A1- and SLC2A3-mediated glucose transport to meet the energy needs of mesendoderm differentiation. Accumulates in the posterior primitive streak of mid-gastrulation embryos at 7.0 dpc. In the adult, highly abundant and enriched in the brain compared to other organs.

It is found in the cell membrane. Functionally, required for mesendoderm differentiation. Interacts with glucose transporters and promotes glucose uptake. Probably augments the glucose uptake capacity of glucose transporter proteins to meet the energy needs of mesendoderm differentiation. The protein is Small integral membrane protein 43 of Mus musculus (Mouse).